The primary structure comprises 263 residues: Isatin hydrolase (263 aa).

Position 62-66 (62-66 (FFAWN)) interacts with substrate. Mn(2+) is bound by residues H73, H77, and D79. H83 serves as the catalytic Proton donor/acceptor. H212 serves as a coordination point for substrate.

It belongs to the Cyclase 1 superfamily. As to quaternary structure, homodimer. Mn(2+) serves as cofactor.

It catalyses the reaction isatin + H2O = isatinate + H(+). Its activity is regulated as follows. Inhibited by thioisatinate. In terms of biological role, involved in the degradation of the plant hormone indole-3-acetic acid (IAA). Catalyzes the hydrolysis of the cyclic amide bond (lactam) of isatin (1H-indole-2,3-dione) to yield isatinate (2-(2-aminophenyl)-2-oxoacetate). The polypeptide is Isatin hydrolase (Roseibium aggregatum (strain ATCC 25650 / DSM 13394 / JCM 20685 / NBRC 16684 / NCIMB 2208 / IAM 12614 / B1) (Stappia aggregata)).